Here is a 722-residue protein sequence, read N- to C-terminus: MVRYMVTSALPYANGPIHAGHLAGAYLPADIFVRYLRLKGEDVVFICGTDEHGTPISFRALKEGRSPREIVDEFHEQIKITFQRAKISFDFFGRTELPIHYKLSQEFFLKAYENGHLVKKVTKQAYCEHDKMFLPDRFVIGTCPYCGAEDQKGDQCEVCGRPLTPEILINPRCAICGRPISFRDSAHYYIKMQDFAERLKRWIEKQPWKPNVKNMVLSWIEEGLEERAITRDLNWGIPVPLDEEDMKGKVLYVWFEAPIGYISITIEHFKRIGKPNEWKKYWLNIDGQTRVIHFIGKDNIPFHAIFWPAFLMAYGKYKDEEVEAEWNLPYDIPANEYLTLEGKKFSTSRNWAIWVHEFLDVFPADYLRYYLTTIMPETRDSDFSFSDFKVRINEELVNNLGNFVHRALTFVNRYFDGVVPERGELDELDREALEEIEKAFKEVGELIMNYRFKDALKRVMSLASFGNRYFDHKQPWKTAKEDKVRTGTTVNISLQIVKALGILLEPFLPDASEKIWHLLNLDEVKRWEFRELPAGHKVRKPEILFKKVTDDQIIYFILNYMAKGNPEGARILLDKYYKREDVIRVAKEKFGDEAEVVLRRVYKDIKLKEKKEGKEMYVKFDDFAKLDLRVGKIIEVKDHPNADKLYVVKVDLGDEVRTLVAGLKKYYKPEELLNRYVVVVANLEPKKLRGIGSQGMLLAADDGERVALLMPDKEVKLGAKVR.

Positions 11–21 match the 'HIGH' region motif; the sequence is PYANGPIHAGH. Residues C143, C146, C156, and C159 each contribute to the Zn(2+) site. Positions 344 to 348 match the 'KMSKS' region motif; that stretch reads KFSTS. An ATP-binding site is contributed by T347. A tRNA-binding domain is found at 622–722; the sequence is DFAKLDLRVG…KEVKLGAKVR (101 aa).

The protein belongs to the class-I aminoacyl-tRNA synthetase family. MetG type 1 subfamily. As to quaternary structure, homodimer. It depends on Zn(2+) as a cofactor.

The protein resides in the cytoplasm. The enzyme catalyses tRNA(Met) + L-methionine + ATP = L-methionyl-tRNA(Met) + AMP + diphosphate. Its function is as follows. Is required not only for elongation of protein synthesis but also for the initiation of all mRNA translation through initiator tRNA(fMet) aminoacylation. The protein is Methionine--tRNA ligase of Pyrococcus abyssi (strain GE5 / Orsay).